The primary structure comprises 625 residues: Phosphomethylpyrimidine synthase (625 aa).

Substrate contacts are provided by residues asparagine 231, methionine 260, tyrosine 289, histidine 325, 345-347, 386-389, and glutamate 425; these read SRG and DGLR. Residue histidine 429 coordinates Zn(2+). Residue tyrosine 452 participates in substrate binding. Position 493 (histidine 493) interacts with Zn(2+). [4Fe-4S] cluster contacts are provided by cysteine 573, cysteine 576, and cysteine 581.

This sequence belongs to the ThiC family. In terms of assembly, homodimer. The cofactor is [4Fe-4S] cluster.

The catalysed reaction is 5-amino-1-(5-phospho-beta-D-ribosyl)imidazole + S-adenosyl-L-methionine = 4-amino-2-methyl-5-(phosphooxymethyl)pyrimidine + CO + 5'-deoxyadenosine + formate + L-methionine + 3 H(+). The protein operates within cofactor biosynthesis; thiamine diphosphate biosynthesis. In terms of biological role, catalyzes the synthesis of the hydroxymethylpyrimidine phosphate (HMP-P) moiety of thiamine from aminoimidazole ribotide (AIR) in a radical S-adenosyl-L-methionine (SAM)-dependent reaction. This chain is Phosphomethylpyrimidine synthase, found in Acinetobacter baumannii (strain AB0057).